We begin with the raw amino-acid sequence, 171 residues long: Endoribonuclease YbeY (171 aa).

The Zn(2+) site is built by His-126, His-130, and His-136.

This sequence belongs to the endoribonuclease YbeY family. Requires Zn(2+) as cofactor.

The protein localises to the cytoplasm. Its function is as follows. Single strand-specific metallo-endoribonuclease involved in late-stage 70S ribosome quality control and in maturation of the 3' terminus of the 16S rRNA. The sequence is that of Endoribonuclease YbeY from Rhizobium etli (strain CIAT 652).